The primary structure comprises 237 residues: uncharacterized protein (237 aa).

The signal sequence occupies residues 1–28 (MNRPLLSVAGSLFVAAWALYIFSCFQHG). The segment at 52–96 (NARDTAAHPSDTADNTSGSSTTTDPRSHGNAPPAPVGGAAQTHTQ) is disordered. Residues 63–75 (TADNTSGSSTTTD) show a composition bias toward polar residues.

This is an uncharacterized protein from Treponema pallidum (strain Nichols).